Reading from the N-terminus, the 395-residue chain is Accessory Sec system protein translocase subunit SecY2 (395 aa).

10 consecutive transmembrane segments (helical) span residues 13 to 33, 63 to 83, 102 to 122, 128 to 148, 157 to 177, 190 to 210, 239 to 259, 272 to 292, 326 to 346, and 355 to 375; these read VSFS…PLPF, ISIF…IQLL, LMQF…VFAF, GLED…VVWL, VGAS…PNII, WIWL…WLAF, MAAM…LMVG, VFQA…FTFV, LIWI…VFGL, and YAGF…MGGI.

This sequence belongs to the SecY/SEC61-alpha family. SecY2 subfamily. As to quaternary structure, component of the accessory SecA2/SecY2 protein translocase complex required to export cell wall proteins. May form heterotrimers with SecE and SecG subunits.

Its subcellular location is the cell membrane. Its function is as follows. Part of the accessory SecA2/SecY2 system specifically required for export of possible cell wall proteins. The central subunit of a protein translocation channel. The chain is Accessory Sec system protein translocase subunit SecY2 from Lactobacillus johnsonii (strain CNCM I-12250 / La1 / NCC 533).